The following is a 479-amino-acid chain: Catalase A (479 aa).

Positions 1–21 (MSKILTTASGAPVADNQNSRS) are enriched in polar residues. The interval 1 to 25 (MSKILTTASGAPVADNQNSRSAGPR) is disordered. Active-site residues include His53 and Asn126. A heme-binding site is contributed by Tyr336. Residues 350 to 376 (QLPVNAPRCPVNSYQRDGSMATGSYGS) are disordered. Positions 361–376 (NSYQRDGSMATGSYGS) are enriched in polar residues.

It belongs to the catalase family. It depends on heme as a cofactor.

It carries out the reaction 2 H2O2 = O2 + 2 H2O. Activated by peroxide. Its function is as follows. The major expressed catalase protein in strain Corvallis in stationary phase. Decomposes hydrogen peroxide into water and oxygen; serves to protect cells from the toxic effects of hydrogen peroxide. The polypeptide is Catalase A (katA) (Pseudomonas putida (Arthrobacter siderocapsulatus)).